The primary structure comprises 190 residues: dCTP deaminase (190 aa).

113 to 118 (KSTYAR) is a dCTP binding site. Glutamate 139 functions as the Proton donor/acceptor in the catalytic mechanism. Residues glutamine 158, tyrosine 172, lysine 181, and glutamine 182 each coordinate dCTP.

It belongs to the dCTP deaminase family. In terms of assembly, homotrimer.

It carries out the reaction dCTP + H2O + H(+) = dUTP + NH4(+). It participates in pyrimidine metabolism; dUMP biosynthesis; dUMP from dCTP (dUTP route): step 1/2. Catalyzes the deamination of dCTP to dUTP. The protein is dCTP deaminase of Chlamydia pneumoniae (Chlamydophila pneumoniae).